Consider the following 688-residue polypeptide: MSKDFLLEIGLEEMPAQYVTSSVLQLEKRVTDWLTENKIEFGEIKTYSTPRRLTVLVEGMAEEQANRVEEAKGPAKKIALDEEGNWSKAALGFAKSQKVDPADLTFRDIKGVEYIYIKKEVIGEKTSTLLPSLEKVVTSMTFPVSMHWGSNDLRYIRPIKWLIAMFDEEIIPFEITGVTTSNTSRGHRFLGKSATIKQPSDYPNALLEQFVVVNAEERKQAIVEQLRELESMENWQIKEDDDLLEEVTNLVEYPTVLSGNFEKEYLELPEEVLITTMKEHQRYFPVFSQAGELLPHFVTVRNGNHENLDTVARGNEKVLRARLSDADFFYQEDLKMTIDEAVAKLQNIVFHEKLGTLTEKMKRVQKVALMLADYLDWQEEDKQDIIRLTNIYKFDLVTNIVGEFPELQGLMGEKYALLQGEKPAIATAIREHYLPNSAEGELPQTDLGSLIAIADKLETLIGFFCVNIVPTGSADPFGLRRSAFGAMRIIQANGWNIPMLEVISRIVDMERAEGSTELPDADVKKEVQTFLKNRLRVILQGHHIRHDIIDAVIGGDPNVIPQLIDRAQILNEHAEAEWFRPTIEALSRVVKIAKKYEDGVEVDPALFENEYEQALFDKLEKLKFDYAGLTIIERLKAFADLRTTIDAYFDNTLVMSDNDELKNNRLALLFELASFIKEFAQMDEINVK.

This sequence belongs to the class-II aminoacyl-tRNA synthetase family. As to quaternary structure, tetramer of two alpha and two beta subunits.

The protein resides in the cytoplasm. It catalyses the reaction tRNA(Gly) + glycine + ATP = glycyl-tRNA(Gly) + AMP + diphosphate. This Listeria monocytogenes serovar 1/2a (strain ATCC BAA-679 / EGD-e) protein is Glycine--tRNA ligase beta subunit.